Consider the following 180-residue polypeptide: Putative manganese efflux pump MntP (180 aa).

The next 6 membrane-spanning stretches (helical) occupy residues 6–26 (LFAL…GIGI), 34–54 (IALI…LGWY), 67–87 (ASIA…WDTI), 103–123 (GGLL…GFTL), 130–150 (LVLA…AGLT), and 159–179 (IGER…VKLF).

This sequence belongs to the MntP (TC 9.B.29) family.

It is found in the cell membrane. Probably functions as a manganese efflux pump. The polypeptide is Putative manganese efflux pump MntP (Desulforamulus reducens (strain ATCC BAA-1160 / DSM 100696 / MI-1) (Desulfotomaculum reducens)).